Consider the following 69-residue polypeptide: Alpha-conotoxin Mr1.7a (69 aa).

The first 21 residues, 1–21 (MGMRMMFTVFLLVVLATTVVS), serve as a signal peptide directing secretion. Positions 22-49 (FTSNRVLDPAFRRRNAAAKASDLIALNA) are excised as a propeptide. Pro52 and Pro58 each carry 4-hydroxyproline; in Mr1.7b. 2 disulfide bridges follow: Cys54-Cys60 and Cys55-Cys68. The interval 56 to 58 (THP) is lacks the Ser-Xaa-Pro motif that is crucial for potent interaction with nAChR. Cysteine amide is present on Cys68.

Belongs to the conotoxin A superfamily. In terms of processing, two 4-hydroxyprolines have been detected by MS but the assignment of which of the three prolines is modified is uncertain. Expressed by the venom duct.

Its subcellular location is the secreted. Functionally, acts as a co-agonist with PNU (an alpha-7 nAChR-selective allosteric modulator) at the endogenous alpha-7/CHRNA7 nicotinic acetylcholine receptors (nAChR) when tested in human SH-SY5Y neuroblastoma cells. Is the third alpha-conotoxin that acts as an agonist (after alpha-conotoxin SrIA/SrIB). Also acts as an antagonist at human alpha-7 nAChRs heterologously expressed in Xenopus oocytes. Has possibly a distinct nAChR binding mode from other alpha-conotoxins, due to a different three residue motif (lacks the Ser-Xaa-Pro motif). Its function is as follows. Acts as a weak partial agonist at alpha-7/CHRNA7 nicotinic acetylcholine receptors (nAChR) when tested in human SH-SY5Y neuroblastoma cells. Has possibly a distinct nAChR binding mode from other alpha-conotoxins, due to a different three residue motif (lacks the Ser-Xaa-Pro motif). In Conus marmoreus (Marble cone), this protein is Alpha-conotoxin Mr1.7a.